The sequence spans 135 residues: Putative pre-16S rRNA nuclease (135 aa).

The protein belongs to the YqgF nuclease family.

It is found in the cytoplasm. Functionally, could be a nuclease involved in processing of the 5'-end of pre-16S rRNA. The sequence is that of Putative pre-16S rRNA nuclease from Christiangramia forsetii (strain DSM 17595 / CGMCC 1.15422 / KT0803) (Gramella forsetii).